Consider the following 179-residue polypeptide: Inosine/xanthosine triphosphatase (179 aa).

Substrate contacts are provided by residues 8–13 (TTNPAK) and 68–69 (EA). Glu-68 serves as a coordination point for Mg(2+).

Belongs to the YjjX NTPase family. Homodimer. Mg(2+) is required as a cofactor. Mn(2+) serves as cofactor.

It carries out the reaction XTP + H2O = XDP + phosphate + H(+). The enzyme catalyses ITP + H2O = IDP + phosphate + H(+). Its function is as follows. Phosphatase that hydrolyzes non-canonical purine nucleotides such as XTP and ITP to their respective diphosphate derivatives. Probably excludes non-canonical purines from DNA/RNA precursor pool, thus preventing their incorporation into DNA/RNA and avoiding chromosomal lesions. The polypeptide is Inosine/xanthosine triphosphatase (Serratia proteamaculans (strain 568)).